The primary structure comprises 458 residues: Protein adenylyltransferase FICD (458 aa).

At methionine 1–arginine 23 the chain is on the cytoplasmic side. Residues phenylalanine 24–leucine 44 traverse the membrane as a helical; Signal-anchor for type II membrane protein segment. The Lumenal portion of the chain corresponds to glycine 45 to proline 458. At threonine 80 the chain carries O-AMP-threonine; by autocatalysis. TPR repeat units follow at residues alanine 106–phenylalanine 139 and valine 140–histidine 173. Threonine 183 is subject to O-AMP-threonine; by autocatalysis. The short motif at threonine 230–glycine 235 is the Inhibitory (S/T)XXXE(G/N) motif element. Glutamate 234 contributes to the ATP binding site. An N-linked (GlcNAc...) asparagine glycan is attached at asparagine 275. A Fido domain is found at valine 285–lysine 420. Residue valine 316–histidine 319 coordinates ATP. The active site involves histidine 363. ATP-binding positions include aspartate 367 to arginine 374, tyrosine 399 to tyrosine 400, and asparagine 407.

The protein belongs to the fic family. In terms of assembly, homodimer. Interacts with HD. Mg(2+) is required as a cofactor. Mn(2+) serves as cofactor. Post-translationally, auto-AMPylated in vitro.

It localises to the endoplasmic reticulum membrane. The catalysed reaction is L-tyrosyl-[protein] + ATP = O-(5'-adenylyl)-L-tyrosyl-[protein] + diphosphate. The enzyme catalyses 3-O-(5'-adenylyl)-L-threonyl-[protein] + H2O = L-threonyl-[protein] + AMP + H(+). It carries out the reaction L-threonyl-[protein] + ATP = 3-O-(5'-adenylyl)-L-threonyl-[protein] + diphosphate. Its activity is regulated as follows. The side chain of Glu-234 determines which of the two opposing activities (AMPylase or de-AMPylase) will take place. In response to endoplasmic reticulum stress, mediates de-AMPylase activity. Adenylyltransferase activity is inhibited by the inhibitory helix present at the N-terminus: Glu-234 binds ATP and competes with ATP-binding at Arg-374, thereby preventing adenylyltransferase activity. In unstressed cells, disengagement of Glu-234 promotes adenylyltransferase activity. Activation dissociates ATP-binding from Glu-234, allowing ordered binding of the entire ATP moiety with the alpha-phosphate in an orientation that is productive for accepting an incoming target hydroxyl side chain. Protein that can both mediate the addition of adenosine 5'-monophosphate (AMP) to specific residues of target proteins (AMPylation), and the removal of the same modification from target proteins (de-AMPylation), depending on the context. The side chain of Glu-231 determines which of the two opposing activities (AMPylase or de-AMPylase) will take place. Acts as a key regulator of the ERN1/IRE1-mediated unfolded protein response (UPR) by mediating AMPylation or de-AMPylation of HSPA5/BiP. In unstressed cells, acts as an adenylyltransferase by mediating AMPylation of HSPA5/BiP at 'Thr-518', thereby inactivating it. In response to endoplasmic reticulum stress, acts as a phosphodiesterase by mediating removal of ATP (de-AMPylation) from HSPA5/BiP at 'Thr-518', leading to restore HSPA5/BiP activity. Although it is able to AMPylate RhoA, Rac and Cdc42 Rho GTPases in vitro, Rho GTPases do not constitute physiological substrates. The polypeptide is Protein adenylyltransferase FICD (Mus musculus (Mouse)).